A 112-amino-acid polypeptide reads, in one-letter code: Inner membrane assembly complex subunit 17 (112 aa).

Residues 1-24 constitute a mitochondrion transit peptide; the sequence is MLRKLPINFAKWTVKKVPVQQKRF. Residues 25-44 are Mitochondrial matrix-facing; that stretch reads NSQQKEISPHIMFYKNYARP. Residues 45–62 form a helical membrane-spanning segment; sequence LGKVTLFALATYYGLEIV. The Mitochondrial intermembrane portion of the chain corresponds to 63–112; it reads WWKLDASEQEAIKNSKLLICESSFSLLTFRRITEFRECEIKTRDLYDPEI.

The protein belongs to the INA17 family. As to quaternary structure, component of the inner membrane assembly (INA) complex. Interacts with a subset of F(1)F(0)-ATP synthase subunits of the F(1)-domain and the peripheral stalk.

It localises to the mitochondrion inner membrane. Its function is as follows. Component of the INA complex (INAC) that promotes the biogenesis of mitochondrial F(1)F(0)-ATP synthase. INAC facilitates the assembly of the peripheral stalk and promotes the assembly of the catalytic F(1)-domain with the membrane-embedded F(0)-domain. In Schizosaccharomyces pombe (strain 972 / ATCC 24843) (Fission yeast), this protein is Inner membrane assembly complex subunit 17.